Here is a 340-residue protein sequence, read N- to C-terminus: Selenide, water dikinase (340 aa).

Residue Sec17 is part of the active site. A non-standard amino acid (selenocysteine) is located at residue Sec17. ATP is bound by residues Lys20 and 45–47 (NNE). A Mg(2+)-binding site is contributed by Asp48. ATP-binding positions include Asp65, Asp88, and 136-138 (GHT). Asp88 is a binding site for Mg(2+). Position 224 (Asp224) interacts with Mg(2+).

The protein belongs to the selenophosphate synthase 1 family. Class I subfamily. In terms of assembly, homodimer. The cofactor is Mg(2+).

The enzyme catalyses hydrogenselenide + ATP + H2O = selenophosphate + AMP + phosphate + 2 H(+). In terms of biological role, synthesizes selenophosphate from selenide and ATP. The protein is Selenide, water dikinase of Campylobacter jejuni subsp. jejuni serotype O:2 (strain ATCC 700819 / NCTC 11168).